An 860-amino-acid chain; its full sequence is Leucine--tRNA ligase (860 aa).

The short motif at 42-52 (PYPSGRLHMGH) is the 'HIGH' region element. The short motif at 619 to 623 (KMSKS) is the 'KMSKS' region element. Lysine 622 contacts ATP.

It belongs to the class-I aminoacyl-tRNA synthetase family.

Its subcellular location is the cytoplasm. The catalysed reaction is tRNA(Leu) + L-leucine + ATP = L-leucyl-tRNA(Leu) + AMP + diphosphate. The polypeptide is Leucine--tRNA ligase (Histophilus somni (strain 129Pt) (Haemophilus somnus)).